A 440-amino-acid polypeptide reads, in one-letter code: Ribulose bisphosphate carboxylase large chain (440 aa).

An N6,N6,N6-trimethyllysine modification is found at Lys4. 2 residues coordinate substrate: Asn113 and Thr163. Lys165 serves as the catalytic Proton acceptor. Lys167 lines the substrate pocket. Residues Lys191, Asp193, and Glu194 each contribute to the Mg(2+) site. N6-carboxylysine is present on Lys191. The active-site Proton acceptor is the His284. Residues Arg285, His317, and Ser369 each coordinate substrate.

It belongs to the RuBisCO large chain family. Type I subfamily. Heterohexadecamer of 8 large chains and 8 small chains; disulfide-linked. The disulfide link is formed within the large subunit homodimers. The cofactor is Mg(2+). In terms of processing, the disulfide bond which can form in the large chain dimeric partners within the hexadecamer appears to be associated with oxidative stress and protein turnover.

The protein resides in the plastid. It is found in the chloroplast. It catalyses the reaction 2 (2R)-3-phosphoglycerate + 2 H(+) = D-ribulose 1,5-bisphosphate + CO2 + H2O. It carries out the reaction D-ribulose 1,5-bisphosphate + O2 = 2-phosphoglycolate + (2R)-3-phosphoglycerate + 2 H(+). Functionally, ruBisCO catalyzes two reactions: the carboxylation of D-ribulose 1,5-bisphosphate, the primary event in carbon dioxide fixation, as well as the oxidative fragmentation of the pentose substrate in the photorespiration process. Both reactions occur simultaneously and in competition at the same active site. The polypeptide is Ribulose bisphosphate carboxylase large chain (Ptychomitrium gardneri (Gardner's ptychomitrium moss)).